The following is a 454-amino-acid chain: Cobyrinate a,c-diamide synthase (454 aa).

The GATase cobBQ-type domain occupies 247 to 442; the sequence is KIGIAMDSAF…IHAHWASNPN (196 aa). The active-site Nucleophile is the C329.

The protein belongs to the CobB/CbiA family. Requires Mg(2+) as cofactor.

It carries out the reaction cob(II)yrinate + 2 L-glutamine + 2 ATP + 2 H2O = cob(II)yrinate a,c diamide + 2 L-glutamate + 2 ADP + 2 phosphate + 2 H(+). Its pathway is cofactor biosynthesis; adenosylcobalamin biosynthesis; cob(II)yrinate a,c-diamide from sirohydrochlorin (anaerobic route): step 10/10. In terms of biological role, catalyzes the ATP-dependent amidation of the two carboxylate groups at positions a and c of cobyrinate, using either L-glutamine or ammonia as the nitrogen source. The chain is Cobyrinate a,c-diamide synthase from Leptospira interrogans serogroup Icterohaemorrhagiae serovar copenhageni (strain Fiocruz L1-130).